We begin with the raw amino-acid sequence, 377 residues long: Nitric oxide reductase FlRd-NAD(+) reductase (377 aa).

It belongs to the FAD-dependent oxidoreductase family. Requires FAD as cofactor.

Its subcellular location is the cytoplasm. The enzyme catalyses 2 reduced [nitric oxide reductase rubredoxin domain] + NAD(+) + H(+) = 2 oxidized [nitric oxide reductase rubredoxin domain] + NADH. The protein operates within nitrogen metabolism; nitric oxide reduction. In terms of biological role, one of at least two accessory proteins for anaerobic nitric oxide (NO) reductase. Reduces the rubredoxin moiety of NO reductase. The sequence is that of Nitric oxide reductase FlRd-NAD(+) reductase from Escherichia coli O9:H4 (strain HS).